A 145-amino-acid polypeptide reads, in one-letter code: Lysozyme C (145 aa).

The N-terminal stretch at 1–19 is a signal peptide; it reads MLFFGFLLAFLSAVPGTEG. Positions 20 to 145 constitute a C-type lysozyme domain; the sequence is EIIPRCELVK…RDLSSYVKGC (126 aa). 4 disulfides stabilise this stretch: Cys-25/Cys-145, Cys-49/Cys-133, Cys-82/Cys-98, and Cys-94/Cys-112. Catalysis depends on residues Glu-54 and Asp-70.

The protein belongs to the glycosyl hydrolase 22 family. In terms of assembly, monomer.

The protein localises to the secreted. The catalysed reaction is Hydrolysis of (1-&gt;4)-beta-linkages between N-acetylmuramic acid and N-acetyl-D-glucosamine residues in a peptidoglycan and between N-acetyl-D-glucosamine residues in chitodextrins.. In terms of biological role, lysozymes have primarily a bacteriolytic function; those in tissues and body fluids are associated with the monocyte-macrophage system and enhance the activity of immunoagents. The chain is Lysozyme C (LYZ) from Opisthocomus hoazin (Hoatzin).